The following is a 689-amino-acid chain: Glycine--tRNA ligase beta subunit (689 aa).

The protein belongs to the class-II aminoacyl-tRNA synthetase family. As to quaternary structure, tetramer of two alpha and two beta subunits.

The protein resides in the cytoplasm. The catalysed reaction is tRNA(Gly) + glycine + ATP = glycyl-tRNA(Gly) + AMP + diphosphate. The protein is Glycine--tRNA ligase beta subunit of Salmonella dublin (strain CT_02021853).